The chain runs to 286 residues: Thymidylate synthase (286 aa).

Position 140–141 (140–141) interacts with dUMP; that stretch reads RR. Catalysis depends on C161, which acts as the Nucleophile. DUMP is bound by residues 185–188, N196, and 226–228; these read RSND and HIY. D188 lines the (6R)-5,10-methylene-5,6,7,8-tetrahydrofolate pocket. A285 is a (6R)-5,10-methylene-5,6,7,8-tetrahydrofolate binding site.

This sequence belongs to the thymidylate synthase family. Bacterial-type ThyA subfamily. Homodimer.

The protein resides in the cytoplasm. The enzyme catalyses dUMP + (6R)-5,10-methylene-5,6,7,8-tetrahydrofolate = 7,8-dihydrofolate + dTMP. It functions in the pathway pyrimidine metabolism; dTTP biosynthesis. In terms of biological role, catalyzes the reductive methylation of 2'-deoxyuridine-5'-monophosphate (dUMP) to 2'-deoxythymidine-5'-monophosphate (dTMP) while utilizing 5,10-methylenetetrahydrofolate (mTHF) as the methyl donor and reductant in the reaction, yielding dihydrofolate (DHF) as a by-product. This enzymatic reaction provides an intracellular de novo source of dTMP, an essential precursor for DNA biosynthesis. The protein is Thymidylate synthase of Streptococcus thermophilus (strain ATCC BAA-491 / LMD-9).